Consider the following 129-residue polypeptide: ATP synthase epsilon chain (129 aa).

This sequence belongs to the ATPase epsilon chain family. F-type ATPases have 2 components, CF(1) - the catalytic core - and CF(0) - the membrane proton channel. CF(1) has five subunits: alpha(3), beta(3), gamma(1), delta(1), epsilon(1). CF(0) has three main subunits: a, b and c.

It is found in the cell inner membrane. In terms of biological role, produces ATP from ADP in the presence of a proton gradient across the membrane. The sequence is that of ATP synthase epsilon chain from Campylobacter concisus (strain 13826).